We begin with the raw amino-acid sequence, 131 residues long: Mesogenin-1 (131 aa).

Residues 22-79 (EDRSFGDSASSPESESFDSACSSPDARSSPTAGCEHAEQQKPKVKMSMRRRMKASERE) form a disordered region. Over residues 27 to 45 (GDSASSPESESFDSACSSP) the composition is skewed to low complexity. Residues 63–73 (PKVKMSMRRRM) show a composition bias toward basic residues. A bHLH domain is found at 70 to 124 (RRRMKASEREKLRMRSLAEALHQLRDYLPPGYSRRGQPLTKIQTLKYTIQYIKEL).

Coexpression of ntl and spt is required for expression.

Its subcellular location is the nucleus. Functionally, involved in specifying the paraxial, but not dorsal, mesoderm. May regulate the expression of T-box transcription factors required for mesoderm formation and differentiation. In Danio rerio (Zebrafish), this protein is Mesogenin-1 (msgn1).